The primary structure comprises 118 residues: MKLRANRVGEQMKKELGDIISRKIKDPRVGFVTVTDVQVSGDLQIATVYISVLGDEEQKESTLKGLAKAKGFIRSEIGQRIRLRKTPEISFEFDESIGYGHRIDTLLHEINKEGKREE.

The protein belongs to the RbfA family. Monomer. Binds 30S ribosomal subunits, but not 50S ribosomal subunits or 70S ribosomes.

The protein resides in the cytoplasm. Functionally, one of several proteins that assist in the late maturation steps of the functional core of the 30S ribosomal subunit. Associates with free 30S ribosomal subunits (but not with 30S subunits that are part of 70S ribosomes or polysomes). Required for efficient processing of 16S rRNA. May interact with the 5'-terminal helix region of 16S rRNA. This Bacillus cereus (strain ATCC 10987 / NRS 248) protein is Ribosome-binding factor A.